A 337-amino-acid chain; its full sequence is 4-hydroxyproline 2-epimerase (337 aa).

The Proton acceptor role is filled by Cys91. Substrate contacts are provided by residues 92–93 (GH), Asp252, and 257–258 (GT).

It belongs to the proline racemase family.

The catalysed reaction is trans-4-hydroxy-L-proline = cis-4-hydroxy-D-proline. Its function is as follows. Catalyzes the epimerization of trans-4-hydroxy-L-proline (t4LHyp) to cis-4-hydroxy-D-proline (c4DHyp). Is involved in a degradation pathway that converts t4LHyp to alpha-ketoglutarate, which allows R.sphaeroides to grow on t4LHyp as a sole carbon source. Displays no proline racemase activity. In Cereibacter sphaeroides (strain ATCC 17023 / DSM 158 / JCM 6121 / CCUG 31486 / LMG 2827 / NBRC 12203 / NCIMB 8253 / ATH 2.4.1.) (Rhodobacter sphaeroides), this protein is 4-hydroxyproline 2-epimerase.